The primary structure comprises 32 residues: KPNYKRQFEPFSDELIHYINLEDLPESFDARQ.

Residues 1–22 (KPNYKRQFEPFSDELIHYINLE) constitute a propeptide, activation peptide.

It belongs to the peptidase C1 family.

In terms of biological role, thiol protease. The chain is Cathepsin B-like cysteine proteinase from Fasciola hepatica (Liver fluke).